The primary structure comprises 491 residues: CRM-domain containing factor CFM9, mitochondrial (491 aa).

A mitochondrion-targeting transit peptide spans 1–25 (MNQVFKGWSRGMSTSRGRSMRSKVE). Positions 1–34 (MNQVFKGWSRGMSTSRGRSMRSKVESRMRKESGK) are disordered. Residues 22–34 (SKVESRMRKESGK) are compositionally biased toward basic and acidic residues. The CRM domain maps to 90–187 (ELFTSEQVQA…RNYRQPKNLI (98 aa)). Residues 255–265 (PYVFHGDKQSE) show a composition bias toward basic and acidic residues. 2 disordered regions span residues 255-287 (PYVFHGDKQSERGTSVDNREESEPGDEDSDQEE) and 328-491 (RSRT…WDSD). Residues 277–287 (EPGDEDSDQEE) are compositionally biased toward acidic residues. Over residues 345–359 (RRNDRDTHSQRRPND) the composition is skewed to basic and acidic residues. A compositionally biased stretch (acidic residues) spans 360–375 (SDDDDDDGELDSEDDE). The segment covering 392–416 (RPREDFKRRSPDPRPRPRAQVRSDD) has biased composition (basic and acidic residues). A compositionally biased stretch (polar residues) spans 453 to 478 (TVSASSSKQSRFRNNSSRDGINNSKS).

Highly expressed in roots and meristemic regions of young seedlings. Expressed at low levels in stems, trichomes and stigma.

It localises to the mitochondrion. In terms of biological role, involved in the splicing of group II introns in mitochondria. Required for the splicing of mitochondrial introns found in nad1, nad2, nad4, nad5, nad7, rps3 and cox2 genes. Splicing of mitochondrial introns is crucial for mitochondrial biogenesis and function, plant growth and development, and plant response to abiotic stresses. The sequence is that of CRM-domain containing factor CFM9, mitochondrial from Arabidopsis thaliana (Mouse-ear cress).